The primary structure comprises 116 residues: HTH-type transcriptional regulator SarV (116 aa).

The segment at residues 51 to 74 is a DNA-binding region (H-T-H motif); sequence RDTLHFEMLWDTSKIDVIIRKIYK.

It belongs to the SarA family.

The protein localises to the cytoplasm. Part of the pathway by which MgrA and SarA control autolysis. The polypeptide is HTH-type transcriptional regulator SarV (sarV) (Staphylococcus aureus (strain Mu50 / ATCC 700699)).